The following is a 618-amino-acid chain: Chaperone protein HtpG (618 aa).

An a; substrate-binding region spans residues 1 to 340 (MATKHQFQTE…SEDLPLNVSR (340 aa)). The interval 341–545 (EILQQNKILA…KEDNNPMMAN (205 aa)) is b. The c stretch occupies residues 546–618 (LMAQMGQKVP…ELNSLLLQSL (73 aa)).

Belongs to the heat shock protein 90 family. In terms of assembly, homodimer.

The protein localises to the cytoplasm. In terms of biological role, molecular chaperone. Has ATPase activity. The polypeptide is Chaperone protein HtpG (Helicobacter hepaticus (strain ATCC 51449 / 3B1)).